A 1093-amino-acid polypeptide reads, in one-letter code: NACHT, LRR and PYD domains-containing protein 14 (1093 aa).

The Pyrin domain maps to 1 to 97 (MADSSSSSFF…CERAKEEINW (97 aa)). The disordered stretch occupies residues 102 to 121 (IGPDDAKAGETQEDQEAVLG). Residues 177-499 (QIVVLQGAAG…MFYMLKGSWE (323 aa)) form the NACHT domain. Residue 183-190 (GAAGVGKT) participates in ATP binding. LRR repeat units lie at residues 730–750 (NLMHLDLKGSDIGDNGVKSLC), 759–780 (KLQTLRLESCNLTVFCCLNISN), 787–807 (SLIFLNLSTNNLLDDGVQLLC), 816–836 (YLERLSLESCGLTEAGCEYLS), 844–864 (RLTHLCLADNVLGDGGVKLMS), 873–894 (TLKSLVLRRCHFTSLSSEYLST), 901–921 (SLTHLDLGSNWLQDNGVKLLC), 930–951 (NLQDLELMGCVLTNACCLDLAS), 958–978 (NLRSLDLGNNDLQDDGVKILC), 987–1008 (NIQRLGLEYCGLTSLCCQDLSS), and 1015–1035 (RLIKMNLTQNTLGYEGIVKLY).

This sequence belongs to the NLRP family. As to expression, testis-specific.

It localises to the cytoplasm. May be involved in inflammation and spermatogenesis. In Homo sapiens (Human), this protein is NACHT, LRR and PYD domains-containing protein 14 (NLRP14).